The sequence spans 305 residues: Oxygen-dependent coproporphyrinogen-III oxidase (305 aa).

Ser-92 is a binding site for substrate. Positions 96 and 106 each coordinate a divalent metal cation. Catalysis depends on His-106, which acts as the Proton donor. Position 108-110 (108-110 (NVR)) interacts with substrate. A divalent metal cation contacts are provided by His-145 and His-175. Residues 239–274 (YVEFNLLFDRGTLFGLQSGGRAESILISLPPLVRWE) form an important for dimerization region. Residue 257 to 259 (GGR) coordinates substrate.

It belongs to the aerobic coproporphyrinogen-III oxidase family. As to quaternary structure, homodimer. Requires a divalent metal cation as cofactor.

It is found in the cytoplasm. The catalysed reaction is coproporphyrinogen III + O2 + 2 H(+) = protoporphyrinogen IX + 2 CO2 + 2 H2O. It participates in porphyrin-containing compound metabolism; protoporphyrin-IX biosynthesis; protoporphyrinogen-IX from coproporphyrinogen-III (O2 route): step 1/1. Functionally, involved in the heme biosynthesis. Catalyzes the aerobic oxidative decarboxylation of propionate groups of rings A and B of coproporphyrinogen-III to yield the vinyl groups in protoporphyrinogen-IX. The chain is Oxygen-dependent coproporphyrinogen-III oxidase from Xylella fastidiosa (strain 9a5c).